Consider the following 161-residue polypeptide: Nucleotide-binding protein RSc2549 (161 aa).

The protein belongs to the YajQ family.

In terms of biological role, nucleotide-binding protein. The chain is Nucleotide-binding protein RSc2549 from Ralstonia nicotianae (strain ATCC BAA-1114 / GMI1000) (Ralstonia solanacearum).